The chain runs to 305 residues: Ornithine carbamoyltransferase (305 aa).

Carbamoyl phosphate-binding positions include 54–57, Gln81, Arg105, and 132–135; these read STRT and HPCQ. Residues Asn163, Asp223, and 227-228 contribute to the L-ornithine site; that span reads SM. Residues 262 to 263 and Arg290 contribute to the carbamoyl phosphate site; that span reads CL.

This sequence belongs to the aspartate/ornithine carbamoyltransferase superfamily. OTCase family.

It is found in the cytoplasm. The enzyme catalyses carbamoyl phosphate + L-ornithine = L-citrulline + phosphate + H(+). It participates in amino-acid biosynthesis; L-arginine biosynthesis; L-arginine from L-ornithine and carbamoyl phosphate: step 1/3. In terms of biological role, reversibly catalyzes the transfer of the carbamoyl group from carbamoyl phosphate (CP) to the N(epsilon) atom of ornithine (ORN) to produce L-citrulline. In Agrobacterium fabrum (strain C58 / ATCC 33970) (Agrobacterium tumefaciens (strain C58)), this protein is Ornithine carbamoyltransferase.